Consider the following 343-residue polypeptide: Probable dolichyl-diphosphooligosaccharide--protein glycosyltransferase subunit 3A (343 aa).

The N-terminal stretch at 1 to 22 (MVIQTNLSYRFFILIVFLFTLA) is a signal peptide. At 23-185 (NPKSDSDLKN…TVCSIQRPPL (163 aa)) the chain is on the lumenal side. N-linked (GlcNAc...) asparagine glycosylation is found at Asn105, Asn108, and Asn146. The helical transmembrane segment at 186–206 (ISKTQIGIIVAIIIISTPILI) threads the bilayer. At 207 to 220 (KKILKGETLLHDHR) the chain is on the cytoplasmic side. The helical transmembrane segment at 221–241 (IWLVGAVFVYFFSVSGTMHNI) threads the bilayer. Residues 242–273 (IREMPMYIKDYEDSSKFVFFIEESEMQLGAEG) are Lumenal-facing. The chain crosses the membrane as a helical span at residues 274-294 (FFVGFLYTVVGLLLAFVTNVV). Over 295–304 (VRVKKLDEQR) the chain is Cytoplasmic. Residues 305–325 (MAMLLALSISFWAVRKVVYLD) form a helical membrane-spanning segment. Topologically, residues 326–343 (NWKTGYEIYPYWPSSWRG) are lumenal.

It belongs to the OST3/OST6 family. Component of the oligosaccharyltransferase (OST) complex.

Its subcellular location is the endoplasmic reticulum membrane. Subunit of the oligosaccharyl transferase (OST) complex that catalyzes the initial transfer of a defined glycan (Glc(3)Man(9)GlcNAc(2) in eukaryotes) from the lipid carrier dolichol-pyrophosphate to an asparagine residue within an Asn-X-Ser/Thr consensus motif in nascent polypeptide chains, the first step in protein N-glycosylation. N-glycosylation occurs cotranslationally and the complex associates with the Sec61 complex at the channel-forming translocon complex that mediates protein translocation across the endoplasmic reticulum (ER). All subunits are required for a maximal enzyme activity. This chain is Probable dolichyl-diphosphooligosaccharide--protein glycosyltransferase subunit 3A (OST3A), found in Arabidopsis thaliana (Mouse-ear cress).